Here is a 523-residue protein sequence, read N- to C-terminus: Probable DNA ligase (523 aa).

An ATP-binding site is contributed by glutamate 210. Lysine 212 serves as the catalytic N6-AMP-lysine intermediate. Residues arginine 217, arginine 232, glutamate 261, phenylalanine 317, arginine 388, and lysine 394 each contribute to the ATP site.

Belongs to the ATP-dependent DNA ligase family. Mg(2+) is required as a cofactor.

It catalyses the reaction ATP + (deoxyribonucleotide)n-3'-hydroxyl + 5'-phospho-(deoxyribonucleotide)m = (deoxyribonucleotide)n+m + AMP + diphosphate.. Functionally, DNA ligase that seals nicks in double-stranded DNA during DNA replication, DNA recombination and DNA repair. In Nocardia farcinica (strain IFM 10152), this protein is Probable DNA ligase.